Reading from the N-terminus, the 338-residue chain is MENLDALVSQALEAVQSAEDINALEQIRVHYLGKKGELTQVMKTLGNLPAEERPHVGALINVAKERVTEVLNARKASFEQAELTAKLAAECIDVTLPGRGQTSGGLHPITRTLERIEQFFTHIGYGIAEGPEVEDDYHNFEALNIPGHHPARSMHDTFYFNANMLLRTHTSPVQVRTMESQQPPIRIVCPGRVYRSDSDITHSPMFHQIEGLLVDRDINFADLKGTIEEFLRVFFEKELAVRFRPSYFPFTEPSAEVDMECVMCSGKGCRVCKQTGWLEVMGCGMVHPNVLRMSGIDPEEFQGFAFGMGVERLAMLRYGVNDLRLFFDNDLRFLAQFR.

E252 contributes to the Mg(2+) binding site.

This sequence belongs to the class-II aminoacyl-tRNA synthetase family. Phe-tRNA synthetase alpha subunit type 1 subfamily. Tetramer of two alpha and two beta subunits. The cofactor is Mg(2+).

The protein resides in the cytoplasm. The catalysed reaction is tRNA(Phe) + L-phenylalanine + ATP = L-phenylalanyl-tRNA(Phe) + AMP + diphosphate + H(+). This is Phenylalanine--tRNA ligase alpha subunit from Pseudomonas syringae pv. tomato (strain ATCC BAA-871 / DC3000).